Here is a 995-residue protein sequence, read N- to C-terminus: uncharacterized protein (995 aa).

An N-terminal signal peptide occupies residues 1-30; that stretch reads MFIHRMKSNLASLFLSFFLLLACEFTFSYA. N-linked (GlcNAc...) asparagine glycosylation is found at N115, N162, N225, N422, N478, and N486. E502 is an active-site residue. N-linked (GlcNAc...) asparagine glycosylation is found at N546 and N611. Residue D669 is the Proton donor of the active site. N-linked (GlcNAc...) asparagine glycans are attached at residues N670, N823, N843, and N986.

This sequence belongs to the glycosyl hydrolase 31 family.

It is found in the spore wall. This is an uncharacterized protein from Schizosaccharomyces pombe (strain 972 / ATCC 24843) (Fission yeast).